Reading from the N-terminus, the 224-residue chain is Flagellar L-ring protein (224 aa).

The signal sequence occupies residues 1–15; that stretch reads MARYFILAAALLLTA. Cysteine 16 is lipidated: N-palmitoyl cysteine. Cysteine 16 carries the S-diacylglycerol cysteine lipid modification.

This sequence belongs to the FlgH family. The basal body constitutes a major portion of the flagellar organelle and consists of four rings (L,P,S, and M) mounted on a central rod.

Its subcellular location is the cell outer membrane. It is found in the bacterial flagellum basal body. Assembles around the rod to form the L-ring and probably protects the motor/basal body from shearing forces during rotation. The chain is Flagellar L-ring protein from Shewanella sp. (strain MR-4).